Reading from the N-terminus, the 570-residue chain is Proline--tRNA ligase (570 aa).

It belongs to the class-II aminoacyl-tRNA synthetase family. ProS type 1 subfamily. Homodimer.

It is found in the cytoplasm. The catalysed reaction is tRNA(Pro) + L-proline + ATP = L-prolyl-tRNA(Pro) + AMP + diphosphate. In terms of biological role, catalyzes the attachment of proline to tRNA(Pro) in a two-step reaction: proline is first activated by ATP to form Pro-AMP and then transferred to the acceptor end of tRNA(Pro). As ProRS can inadvertently accommodate and process non-cognate amino acids such as alanine and cysteine, to avoid such errors it has two additional distinct editing activities against alanine. One activity is designated as 'pretransfer' editing and involves the tRNA(Pro)-independent hydrolysis of activated Ala-AMP. The other activity is designated 'posttransfer' editing and involves deacylation of mischarged Ala-tRNA(Pro). The misacylated Cys-tRNA(Pro) is not edited by ProRS. The chain is Proline--tRNA ligase from Clostridium perfringens (strain SM101 / Type A).